The following is a 154-amino-acid chain: Superoxide dismutase [Cu-Zn] (154 aa).

Cu cation-binding residues include His47, His49, and His64. A disulfide bond links Cys58 and Cys147. Residues His64, His72, His81, and Asp84 each coordinate Zn(2+). Position 121 (His121) interacts with Cu cation. Arg144 is a binding site for substrate.

It belongs to the Cu-Zn superoxide dismutase family. As to quaternary structure, homodimer. Cu cation serves as cofactor. It depends on Zn(2+) as a cofactor.

The protein resides in the cytoplasm. The catalysed reaction is 2 superoxide + 2 H(+) = H2O2 + O2. Destroys radicals which are normally produced within the cells and which are toxic to biological systems. This chain is Superoxide dismutase [Cu-Zn] (SOD1), found in Claviceps purpurea (strain 20.1) (Ergot fungus).